The sequence spans 124 residues: Small ribosomal subunit protein uS12 (124 aa).

At Asp-89 the chain carries 3-methylthioaspartic acid.

Belongs to the universal ribosomal protein uS12 family. As to quaternary structure, part of the 30S ribosomal subunit. Contacts proteins S8 and S17. May interact with IF1 in the 30S initiation complex.

In terms of biological role, with S4 and S5 plays an important role in translational accuracy. Functionally, interacts with and stabilizes bases of the 16S rRNA that are involved in tRNA selection in the A site and with the mRNA backbone. Located at the interface of the 30S and 50S subunits, it traverses the body of the 30S subunit contacting proteins on the other side and probably holding the rRNA structure together. The combined cluster of proteins S8, S12 and S17 appears to hold together the shoulder and platform of the 30S subunit. The chain is Small ribosomal subunit protein uS12 from Proteus mirabilis (strain HI4320).